The following is a 224-amino-acid chain: tRNA (guanine-N(7)-)-methyltransferase (224 aa).

S-adenosyl-L-methionine contacts are provided by E45, E70, D97, and D119. D119 is an active-site residue. Substrate-binding positions include K123, D155, and 199-202 (TEYE).

Belongs to the class I-like SAM-binding methyltransferase superfamily. TrmB family.

The enzyme catalyses guanosine(46) in tRNA + S-adenosyl-L-methionine = N(7)-methylguanosine(46) in tRNA + S-adenosyl-L-homocysteine. It participates in tRNA modification; N(7)-methylguanine-tRNA biosynthesis. Catalyzes the formation of N(7)-methylguanine at position 46 (m7G46) in tRNA. The protein is tRNA (guanine-N(7)-)-methyltransferase of Ureaplasma urealyticum serovar 10 (strain ATCC 33699 / Western).